A 433-amino-acid chain; its full sequence is uncharacterized protein (433 aa).

The first 28 residues, 1–28 (MKICGLEKFRVFLSLISMVSLLCNGVNG), serve as a signal peptide directing secretion. Residues 29–274 (FTIVRSMAVN…QAELEPKKTG (246 aa)) are Extracellular-facing. The segment covering 235 to 250 (GENANPTANSGTSARS) has biased composition (polar residues). Residues 235 to 266 (GENANPTANSGTSARSNRNEQNKMEEPARNQA) are disordered. A compositionally biased stretch (basic and acidic residues) spans 251–266 (NRNEQNKMEEPARNQA). The helical transmembrane segment at 275–295 (VVVAGVTVSLAAGFVLALATL) threads the bilayer. At 296 to 433 (LLMKKKQTSL…HDKGTDEDKG (138 aa)) the chain is on the cytoplasmic side. 2 disordered regions span residues 320-340 (EEPV…PSFD) and 413-433 (KVIE…EDKG).

Component of the acid-insoluble and acid-soluble organic matrix of the aragonitic skeleton (at protein level).

It is found in the membrane. This is an uncharacterized protein from Acropora millepora (Staghorn coral).